The sequence spans 465 residues: MAFNDDNFMLKNEAAKRLYQQIKDQPIFDYHCHLDPKEIFEDKVYDNIVDLWLGGDHYKWRLMRANGISEEEITGSASKLDKFKAFARTLQRSYGNPVYHWSVMELKNVFGVCELLTEDNAEEIYHRINAYLVEHQISPRKLIADSRVRFIGTTDHPLDDLAWHKRLAADDTFETVVAPTFRPDEAFIEHQRFADFVARLAQATGRTITDFKSFIAAMEERIAYFAENGCKASDISFTEIVFEAAEPEQLDRLMTRVLEGYQPQPLEVKQWQTAVFAELCRLYKHYGFVTQVHFGALRNNHSAIFNKLGADVGVDSLGDQTGLAINMNRLLDHLVQRDSLPKMIWYNLNPSYNIAVANTLANFQANENGIAGYLQFGAGWWFADTKLGMISQMNALAEQGLLANFVGMLTDSRSFLSYQRHDYFRRILSTYLGEWIEEGEVPEDYQALGKMAQDIAYNNAIQYFN.

It belongs to the metallo-dependent hydrolases superfamily. Uronate isomerase family.

It carries out the reaction D-glucuronate = D-fructuronate. The enzyme catalyses aldehydo-D-galacturonate = keto-D-tagaturonate. It functions in the pathway carbohydrate metabolism; pentose and glucuronate interconversion. The protein is Uronate isomerase of Streptococcus equi subsp. equi (strain 4047).